A 372-amino-acid polypeptide reads, in one-letter code: Cobalt-precorrin-5B C(1)-methyltransferase (372 aa).

The protein belongs to the CbiD family.

The catalysed reaction is Co-precorrin-5B + S-adenosyl-L-methionine = Co-precorrin-6A + S-adenosyl-L-homocysteine. The protein operates within cofactor biosynthesis; adenosylcobalamin biosynthesis; cob(II)yrinate a,c-diamide from sirohydrochlorin (anaerobic route): step 6/10. Functionally, catalyzes the methylation of C-1 in cobalt-precorrin-5B to form cobalt-precorrin-6A. This Prochlorococcus marinus (strain MIT 9515) protein is Cobalt-precorrin-5B C(1)-methyltransferase.